Reading from the N-terminus, the 203-residue chain is Secreted phosphoprotein 24 (203 aa).

The N-terminal stretch at 1–23 (MEKMAMKMLVIFVLGMNHWTCTG) is a signal peptide. 2 cysteine pairs are disulfide-bonded: C86–C97 and C110–C128. S90 bears the Phosphoserine mark. A phosphoserine mark is found at S138, S139, S166, and S175.

It belongs to the SPP2 family. Post-translationally, multiply phosphorylated at serine residues in Ser-X-Glu/Ser(P) sequences, a recognition motif for phosphorylation by secretory pathway protein kinase. Phosphorylation sites are present in the extracellular medium. As to expression, in liver and bone but not in heart, lung, kidney, or spleen.

Its subcellular location is the secreted. Could coordinate an aspect of bone turnover. The chain is Secreted phosphoprotein 24 (SPP2) from Bos taurus (Bovine).